Reading from the N-terminus, the 452-residue chain is Cytochrome b-c1 complex subunit 2, mitochondrial (452 aa).

The transit peptide at 1-14 directs the protein to the mitochondrion; that stretch reads MKLLSRAGSFSRFY. N6-acetyllysine occurs at positions 65, 198, and 249. Position 367 is a phosphoserine (serine 367).

Belongs to the peptidase M16 family. UQCRC2/QCR2 subfamily. Component of the ubiquinol-cytochrome c oxidoreductase (cytochrome b-c1 complex, complex III, CIII), a multisubunit enzyme composed of 11 subunits. The complex is composed of 3 respiratory subunits cytochrome b, cytochrome c1 and Rieske protein UQCRFS1, 2 core protein subunits UQCRC1/QCR1 and UQCRC2/QCR2, and 6 low-molecular weight protein subunits UQCRH/QCR6, UQCRB/QCR7, UQCRQ/QCR8, UQCR10/QCR9, UQCR11/QCR10 and subunit 9, the cleavage product of Rieske protein UQCRFS1. The complex exists as an obligatory dimer and forms supercomplexes (SCs) in the inner mitochondrial membrane with NADH-ubiquinone oxidoreductase (complex I, CI) and cytochrome c oxidase (complex IV, CIV), resulting in different assemblies (supercomplex SCI(1)III(2)IV(1) and megacomplex MCI(2)III(2)IV(2)). Interacts with RAB5IF. Interacts with STMP1. As to expression, expressed in the head region and flagellum of epididymal sperm.

The protein resides in the mitochondrion inner membrane. Functionally, component of the ubiquinol-cytochrome c oxidoreductase, a multisubunit transmembrane complex that is part of the mitochondrial electron transport chain which drives oxidative phosphorylation. The respiratory chain contains 3 multisubunit complexes succinate dehydrogenase (complex II, CII), ubiquinol-cytochrome c oxidoreductase (cytochrome b-c1 complex, complex III, CIII) and cytochrome c oxidase (complex IV, CIV), that cooperate to transfer electrons derived from NADH and succinate to molecular oxygen, creating an electrochemical gradient over the inner membrane that drives transmembrane transport and the ATP synthase. The cytochrome b-c1 complex catalyzes electron transfer from ubiquinol to cytochrome c, linking this redox reaction to translocation of protons across the mitochondrial inner membrane, with protons being carried across the membrane as hydrogens on the quinol. In the process called Q cycle, 2 protons are consumed from the matrix, 4 protons are released into the intermembrane space and 2 electrons are passed to cytochrome c. The 2 core subunits UQCRC1/QCR1 and UQCRC2/QCR2 are homologous to the 2 mitochondrial-processing peptidase (MPP) subunits beta-MPP and alpha-MPP respectively, and they seem to have preserved their MPP processing properties. May be involved in the in situ processing of UQCRFS1 into the mature Rieske protein and its mitochondrial targeting sequence (MTS)/subunit 9 when incorporated into complex III. This Rattus norvegicus (Rat) protein is Cytochrome b-c1 complex subunit 2, mitochondrial (Uqcrc2).